A 156-amino-acid chain; its full sequence is Oleosin Zm-I (156 aa).

The disordered stretch occupies residues 1 to 30 (MADHHRGATGGGGGYGDLQRGGGMHGEAQQ). An N-acetylalanine modification is found at alanine 2. Residues 2 to 42 (ADHHRGATGGGGGYGDLQRGGGMHGEAQQQQKQGAMMTALK) are polar. Over residues 8-25 (ATGGGGGYGDLQRGGGMH) the composition is skewed to gly residues. A hydrophobic region spans residues 43-114 (AATAATFGGS…AALSVFSWMY (72 aa)). 2 helical membrane-spanning segments follow: residues 51–71 (GSML…LTVA) and 95–115 (GFVT…WMYK).

The protein belongs to the oleosin family. In terms of processing, the N-terminus is blocked.

It is found in the lipid droplet. Its subcellular location is the membrane. Functionally, may have a structural role to stabilize the lipid body during desiccation of the seed by preventing coalescence of the oil. Probably interacts with both lipid and phospholipid moieties of lipid bodies. May also provide recognition signals for specific lipase anchorage in lipolysis during seedling growth. The protein is Oleosin Zm-I (OLE16) of Zea mays (Maize).